We begin with the raw amino-acid sequence, 246 residues long: Outer membrane protein assembly factor BamD (246 aa).

The first 22 residues, 1–22 (MKKKNSIIFVFMILFFNSTVQS), serve as a signal peptide directing secretion.

This sequence belongs to the BamD family. As to quaternary structure, part of the Bam complex.

It is found in the cell outer membrane. Its function is as follows. Part of the outer membrane protein assembly complex, which is involved in assembly and insertion of beta-barrel proteins into the outer membrane. The chain is Outer membrane protein assembly factor BamD from Buchnera aphidicola subsp. Acyrthosiphon pisum (strain APS) (Acyrthosiphon pisum symbiotic bacterium).